The following is a 387-amino-acid chain: 4-hydroxy-3-methylbut-2-en-1-yl diphosphate synthase (flavodoxin) (387 aa).

[4Fe-4S] cluster is bound by residues Cys280, Cys283, Cys315, and Glu322.

This sequence belongs to the IspG family. Requires [4Fe-4S] cluster as cofactor.

The enzyme catalyses (2E)-4-hydroxy-3-methylbut-2-enyl diphosphate + oxidized [flavodoxin] + H2O + 2 H(+) = 2-C-methyl-D-erythritol 2,4-cyclic diphosphate + reduced [flavodoxin]. It functions in the pathway isoprenoid biosynthesis; isopentenyl diphosphate biosynthesis via DXP pathway; isopentenyl diphosphate from 1-deoxy-D-xylulose 5-phosphate: step 5/6. In terms of biological role, converts 2C-methyl-D-erythritol 2,4-cyclodiphosphate (ME-2,4cPP) into 1-hydroxy-2-methyl-2-(E)-butenyl 4-diphosphate. In Mycobacterium bovis (strain BCG / Pasteur 1173P2), this protein is 4-hydroxy-3-methylbut-2-en-1-yl diphosphate synthase (flavodoxin).